A 361-amino-acid chain; its full sequence is 3-dehydroquinate synthase (361 aa).

The protein belongs to the archaeal-type DHQ synthase family.

The catalysed reaction is 2-amino-2,3,7-trideoxy-D-lyxo-hept-6-ulosonate + NAD(+) + H2O = 3-dehydroquinate + NH4(+) + NADH + H(+). Its function is as follows. Catalyzes the oxidative deamination and cyclization of 2-amino-3,7-dideoxy-D-threo-hept-6-ulosonic acid (ADH) to yield 3-dehydroquinate (DHQ), which is fed into the canonical shikimic pathway of aromatic amino acid biosynthesis. This Methanococcus maripaludis (strain C7 / ATCC BAA-1331) protein is 3-dehydroquinate synthase.